The sequence spans 128 residues: Con-Ins F2b (128 aa).

The N-terminal stretch at 1–24 is a signal peptide; it reads MTTSSYFLLVALGLLLYVCRSSFG. Cystine bridges form between Cys29/Cys104, Cys41/Cys107, Cys53/Cys120, and Cys106/Cys111. The propeptide at 59-89 is c peptide; the sequence is LQGGTGKKRGRASLLRKRRAFLSMLKARAKR. Glu115 is subject to 4-carboxyglutamate; partial. Serine amide is present on Ser127.

This sequence belongs to the insulin family. In terms of assembly, heterodimer of A and B chains; disulfide-linked. In terms of tissue distribution, expressed by the venom gland.

It is found in the secreted. In terms of biological role, this venom insulin facilitates prey capture by rapidly inducing hypoglycemic shock. Intraperitoneal injection of this peptide into zebrafish lowers blood glucose with the same potency than human insulin. In vivo, when applied to water, this peptide reduces overall locomotor activity of zebrafish larvae, observed as a significant decrease in the percentage of time spent swimming and movement frequency. The protein is Con-Ins F2b of Conus floridulus (Cone snail).